Reading from the N-terminus, the 396-residue chain is Cytochrome P450 121 (396 aa).

C345 is a binding site for heme.

The protein belongs to the cytochrome P450 family. It depends on heme as a cofactor.

The protein resides in the cytoplasm. In Mycobacterium bovis (strain ATCC BAA-935 / AF2122/97), this protein is Cytochrome P450 121 (cyp121).